The sequence spans 179 residues: Transcription factor 21 (179 aa).

Residues 19 to 88 (DCDSLKVDSN…VQRNAANARE (70 aa)) are disordered. Composition is skewed to polar residues over residues 30-49 (EFGT…NGSP) and 70-80 (SGVSQEGKQVQ). The bHLH domain maps to 79-131 (VQRNAANARERARMRVLSKAFSRLKTTLPWVPPDTKLSKLDTLRLASSYIAHL).

In terms of assembly, efficient DNA binding requires dimerization with another bHLH protein. Forms a heterodimer with TCF3 and binds the E box (5'-CANNTG-3'). As to expression, expressed at high levels in lung, kidney, gut, heart, ovary and podocytes (visceral glomerular epithelial cells). Also found in spleen, large intestine, uterus, bladder and testis.

The protein localises to the nucleus. Involved in epithelial-mesenchymal interactions in kidney and lung morphogenesis that include epithelial differentiation and branching morphogenesis. May be involved in the organogenesis of the spleen and heart and in cardiac and coronary artery development. May function in the development and sex differentiation of gonad via transcriptional regulation of AD4BP/SF-1. In Mus musculus (Mouse), this protein is Transcription factor 21 (Tcf21).